The sequence spans 390 residues: 1-deoxy-D-xylulose 5-phosphate reductoisomerase (390 aa).

Thr-10, Gly-11, Ser-12, Val-13, and Asn-124 together coordinate NADPH. Lys-125 lines the 1-deoxy-D-xylulose 5-phosphate pocket. An NADPH-binding site is contributed by Glu-126. A Mn(2+)-binding site is contributed by Asp-150. 1-deoxy-D-xylulose 5-phosphate-binding residues include Ser-151, Glu-152, Ser-181, and His-204. Residue Glu-152 coordinates Mn(2+). Gly-210 contacts NADPH. Residues Ser-217, Asn-222, Lys-223, and Glu-226 each contribute to the 1-deoxy-D-xylulose 5-phosphate site. Glu-226 contacts Mn(2+).

Belongs to the DXR family. Requires Mg(2+) as cofactor. Mn(2+) is required as a cofactor.

It carries out the reaction 2-C-methyl-D-erythritol 4-phosphate + NADP(+) = 1-deoxy-D-xylulose 5-phosphate + NADPH + H(+). Its pathway is isoprenoid biosynthesis; isopentenyl diphosphate biosynthesis via DXP pathway; isopentenyl diphosphate from 1-deoxy-D-xylulose 5-phosphate: step 1/6. Its function is as follows. Catalyzes the NADPH-dependent rearrangement and reduction of 1-deoxy-D-xylulose-5-phosphate (DXP) to 2-C-methyl-D-erythritol 4-phosphate (MEP). The chain is 1-deoxy-D-xylulose 5-phosphate reductoisomerase from Janthinobacterium sp. (strain Marseille) (Minibacterium massiliensis).